The primary structure comprises 353 residues: Guanine nucleotide-binding protein subunit beta-5 (353 aa).

7 WD repeats span residues 61–100 (GHGN…KEHA), 103–142 (MPCT…NENM), 151–192 (MHTN…QSFH), 194–236 (HGAD…QAFE), 237–276 (THES…EVAI), 278–320 (SKES…RVSI), and 323–352 (GHEN…LRVW).

Belongs to the WD repeat G protein beta family. As to quaternary structure, component of a complex composed of RGS9 (isoform RGS9-1), GNB5 and RGS9BP; within this complex, the presence of GNB5 stabilizes both itself and RGS9 and increases RGS9 GTPase-activating protein (GAP) activity. Interacts with RGS7, forming the RGS7-GNB5 complex; within this complex, the presence of GNB5 increases RGS7 GTPase-activating protein (GAP) activity. Interacts with GPR158; promotes the GTPase activator activity of the RGS7-GNB5 complex in absence of glycine, in contrast GTPase activator activity of the RGS7-GNB5 complex is inhibited in presence of glycine. Interacts with RGS6.

The protein localises to the membrane. Its function is as follows. Enhances GTPase-activating protein (GAP) activity of regulator of G protein signaling (RGS) proteins, such as RGS7 and RGS9, hence involved in the termination of the signaling initiated by the G protein coupled receptors (GPCRs) by accelerating the GTP hydrolysis on the G-alpha subunits, thereby promoting their inactivation. Increases RGS7 GTPase-activating protein (GAP) activity, thereby regulating mood and cognition. Increases RGS9 GTPase-activating protein (GAP) activity, hence contributes to the deactivation of G protein signaling initiated by D(2) dopamine receptors. May play an important role in neuronal signaling, including in the parasympathetic, but not sympathetic, control of heart rate. This chain is Guanine nucleotide-binding protein subunit beta-5 (GNB5), found in Oryctolagus cuniculus (Rabbit).